We begin with the raw amino-acid sequence, 2559 residues long: MARSKLLLGKLLPLILIFLGLLVQNACSPTEAPELTKRCDKKSTLTIKTECQSCSVNIAVKCPDGYIKITNGTVGVRDCRYSLKIQSYVLDIPGCRHICRKDYLQPQCCPGHWGPDCMECPGGARAPCGGRGVCDEGMEGTGSCSCRAGFRGTACENCAAEDVFGPNCSAVCSCVHGVCNSGISGDGTCECLSAYRGPRCDKPIPECAALLCPENSRCSPSSKDETKLQCKCLPSYKGDGQTCKPINPCLKNVCHPHASCSYLGPNRHSCVCQKGYQGDGQVCLPVDPCQTSYGNCPTKSTVCRYDGPGQSHCECKEHYRNFVPGVGCSMTDICESKNPCHKNANCSTVSPGQTQCTCQKGYVGDGLNCYGNIMQRLRELNTEPRGMWQGQLTSFISILDRTYAWPLSNLGPFTVLLPSDKGLKGVDVKELLMDKEAARYFVKLHIIAGQMSTEQMYNLDTFYTLTGKSGEIINKDKDNQLKLKLYGSKIVQIIQGNIVASNGLVHILDRAMDKIEPTLESNPQQTIMTMLQPRYGKFRSLLEKTNVGQALEKGGIDEPYTIFVPSNEALSNMTAGVLDYLLSPEGSRKLLELVRYHIVAFTQLEVATLVSTLHIRSMANQIITFNISSKGQILANNVAVDETEVAAKNGRIYTLTGVLIPPSILPILPHRCNETKREMKLGTCVRCFMKNWSKCPTNSEPTAIFTNKCFYGSRAWNLKIGCARYCDVTVEIPRCCKGFFGPDCNPCPGGFMNPCSGNGQCIDGLGGNGTCICEDGFQGSRCQFCSKPNRYGPQCNRTCQCVHGICDNRLDSDGSCLPGTCREGTAGRFCDKQTSACGPYMQFCHIHATCEYSNETASCVCNDGYEGDGTLCSKKDPCLGSTSRGGCSPNAECIQASTGTYSCVCQRGWTGNGRDCVEINSCLLPSSGGCHDNATCLYVGPGQNECECKKGFRGNGIDCEPIISCLEQIEKCHPLATCQYTLSGVWSCVCQEGYEGNGVLCYGNVLMELSFLSEAAVFYQWINNASLQSMLSATSNLTVLVPSLQAIKDMDQNEKSFWLSRNNIPALIKYHTLLGTYRVADLQTLPSSHMLATSLQGSFLRLDKADGNITIEGASFVDGDNAATNGVVHIINKVLIPQRGLTGSLPSLLTRLEQMPDYSIFRGYIIHYNLASAIEAADAYTVFVPNNEAIESYIREKKATSLKEDILQYHVVLGEKLLRNDLHNGMHRETMLGFSYLLAFFLHNDQLYVNEAPINYTNVATDKGVIHGLEKVLEIKKNRCDNNDTIIVRGKCGKCSQQTLCPLETKPLSETRKCIYSVYFMGKRSIFIGCQLQCVRTIITSACCAGFFGPQCQACPGKGQNVCSGNGFCLDGVNGTGTCECEQGFNGTACETCTEGKYGIHCDQACSCVHGRCNQGPSGDGSCDCDVGWRGVKCDSEITTDNCNGTCHTSANCLLDPDGKASCKCAAGFQGNGTVCTAINACEISNGGCSAKADCKRTIPGSRVCVCKAGYTGDGIVCLEINPCLENHGGCDRHAECTQTGPNQAVCNCLPKYTGDGKVCTLINVCLTNNGGCSPFAFCNHTEQDQRTCTCKPDYTGDGIVCRGSIHSELPKNPSTSQYFFQLQEHAVQELAGPGPFTVFVPSSDSFNSESKLKVWDKQGLMSQILRYHVVACQQLLLENLKVITSATTLQGEPISISVSQDTVLINKKAKVLSSDIISTNGVIHVIDTLLSPQNLLITPKGASGRVLLNLTTVAANHGYTKFSKLIQDSGLLKVITDPMHTPVTLFWPTDKALQALPQEQQDFLFNEDNKDKLKAYLKFHVIRDTMALASDLPRSASWKTLQGSELSVRCGTGSDVGELFLNGQMCRIIQRRLLFDGGVAYGIDCLLMDPTEGGRCDTFTTFNIPGECGSCFSTPRCPLQSKPKGVRKKCIYNPLPFRRDVEGCQNLCTLVVHVPRCCSGYFMPDCQACPGGPDTPCNNRGMCYDQYKPTGQCQCHTGFNGTACELCLPGRFGPDCQPCGCSEHGQCDEGITGSGQCLCEAGWTGRFCDAPTVVIPVCIPACSMHATCMENNTCVCNLNYEGDGITCTVVDFCKQNNGGCAKVAKCSQKGTQVSCSCQKGYKGDGHSCTEIDPCANGVNGGCHEHATCRMTGPGKQKCECKSHYVGDGRDCEPEQLPLDRCLQDNGQCHPDANCVDLHFQDTTVGVFHLRSPLGQYKLTFDKAKEACAKEAASIATYNQLSYAQKAKYHLCSAGWLESGRVAYPTIYASKKCANIVGIVDYGTRTNKSEMWDVFCYRMKDVNCTCKAGYVGDGFSCNGNLLQVLMSFPSLTNFLTEVLVFSRSSAQGRAFLKHLTDLSISGTLFVPQNSGLPKNKSLSGRDIEHHLTNVNVSFYDDLVNGTVLKTRLGSQLLITSSQDQLHQEARFVDGRAILQWDIIASNGVLHIISEPLKAPPTAATAAHSGLGTGIFCAVVLVTGAIALAAYSYFRLNQRTTGFRRFESEDDIDALAFGKQQPESITNPLYETSTPAAPEPSCDPFTDSGERELENSDPLGALRS.

The first 28 residues, 1–28 (MARSKLLLGKLLPLILIFLGLLVQNACS), serve as a signal peptide directing secretion. Residues 29–2464 (PTEAPELTKR…PPTAATAAHS (2436 aa)) are Extracellular-facing. N-linked (GlcNAc...) asparagine glycosylation occurs at asparagine 71. EGF-like domains follow at residues 116–156 (DCME…TACE), 164–201 (FGPN…PRCD), 203–244 (PIPE…QTCK), 245–284 (PINP…QVCL), and 330–370 (MTDI…LNCY). Cystine bridges form between cysteine 120–cysteine 134, cysteine 128–cysteine 144, and cysteine 146–cysteine 155. An N-linked (GlcNAc...) asparagine glycan is attached at asparagine 167. 12 disulfide bridges follow: cysteine 168-cysteine 179, cysteine 172-cysteine 189, cysteine 191-cysteine 200, cysteine 207-cysteine 218, cysteine 212-cysteine 230, cysteine 232-cysteine 243, cysteine 249-cysteine 260, cysteine 254-cysteine 270, cysteine 272-cysteine 283, cysteine 334-cysteine 346, cysteine 340-cysteine 356, and cysteine 358-cysteine 369. Residue asparagine 345 is glycosylated (N-linked (GlcNAc...) asparagine). 2 FAS1 domains span residues 379–512 (ELNT…DRAM) and 522–659 (NPQQ…TGVL). Asparagine 572, asparagine 626, asparagine 673, and asparagine 691 each carry an N-linked (GlcNAc...) asparagine glycan. Residues 743–783 (DCNPCPGGFMNPCSGNGQCIDGLGGNGTCICEDGFQGSRCQ) form the EGF-like 6 domain. Intrachain disulfides connect cysteine 747/cysteine 761, cysteine 755/cysteine 771, and cysteine 773/cysteine 782. Residue asparagine 768 is glycosylated (N-linked (GlcNAc...) asparagine). Residue asparagine 796 is glycosylated (N-linked (GlcNAc...) asparagine). EGF-like domains are found at residues 833–873 (QTSA…TLCS), 874–917 (KKDP…RDCV), 918–960 (EINS…IDCE), and 961–1002 (PIIS…VLCY). 12 cysteine pairs are disulfide-bonded: cysteine 837-cysteine 850, cysteine 844-cysteine 859, cysteine 861-cysteine 872, cysteine 878-cysteine 893, cysteine 887-cysteine 903, cysteine 905-cysteine 916, cysteine 922-cysteine 936, cysteine 930-cysteine 946, cysteine 948-cysteine 959, cysteine 965-cysteine 978, cysteine 972-cysteine 988, and cysteine 990-cysteine 1001. The N-linked (GlcNAc...) asparagine glycan is linked to asparagine 854. N-linked (GlcNAc...) asparagine glycosylation is present at asparagine 933. FAS1 domains are found at residues 1002 to 1135 (YGNV…NKVL) and 1145 to 1273 (LPSL…EKVL). 5 N-linked (GlcNAc...) asparagine glycosylation sites follow: asparagine 1024, asparagine 1036, asparagine 1108, asparagine 1255, and asparagine 1283. The region spanning 1350–1415 (PQCQACPGKG…CSCVHGRCNQ (66 aa)) is the Laminin EGF-like 1 domain. Disulfide bonds link cysteine 1355-cysteine 1369, cysteine 1363-cysteine 1379, cysteine 1381-cysteine 1390, cysteine 1402-cysteine 1413, cysteine 1406-cysteine 1423, cysteine 1425-cysteine 1434, cysteine 1443-cysteine 1453, cysteine 1447-cysteine 1463, cysteine 1465-cysteine 1476, cysteine 1482-cysteine 1495, cysteine 1489-cysteine 1505, cysteine 1507-cysteine 1518, cysteine 1524-cysteine 1537, cysteine 1531-cysteine 1547, cysteine 1549-cysteine 1560, cysteine 1566-cysteine 1579, cysteine 1573-cysteine 1589, and cysteine 1591-cysteine 1602. N-linked (GlcNAc...) asparagine glycans are attached at residues asparagine 1374 and asparagine 1386. EGF-like domains follow at residues 1439-1477 (TTDN…TVCT), 1478-1519 (AINA…IVCL), 1520-1561 (EINP…KVCT), and 1562-1603 (LINV…IVCR). An N-linked (GlcNAc...) asparagine glycan is attached at asparagine 1444. The N-linked (GlcNAc...) asparagine glycan is linked to asparagine 1472. The N-linked (GlcNAc...) asparagine glycan is linked to asparagine 1580. 2 consecutive FAS1 domains span residues 1603–1731 (RGSI…DTLL) and 1747–1888 (VLLN…DCLL). Asparagine 1750 carries an N-linked (GlcNAc...) asparagine glycan. One can recognise a Laminin EGF-like 2 domain in the interval 1965–2030 (PDCQACPGGP…GCSEHGQCDE (66 aa)). Intrachain disulfides connect cysteine 1970-cysteine 1984, cysteine 1978-cysteine 1994, cysteine 1996-cysteine 2005, cysteine 2017-cysteine 2028, cysteine 2022-cysteine 2038, cysteine 2040-cysteine 2049, cysteine 2059-cysteine 2069, cysteine 2063-cysteine 2075, cysteine 2077-cysteine 2088, cysteine 2094-cysteine 2107, cysteine 2101-cysteine 2116, cysteine 2118-cysteine 2129, cysteine 2135-cysteine 2149, cysteine 2143-cysteine 2159, cysteine 2161-cysteine 2172, cysteine 2228-cysteine 2296, and cysteine 2252-cysteine 2273. Asparagine 2001 is a glycosylation site (N-linked (GlcNAc...) asparagine). EGF-like domains follow at residues 2055–2089 (VIPV…ITCT), 2090–2130 (VVDF…HSCT), and 2131–2173 (EIDP…RDCE). N-linked (GlcNAc...) asparagine glycosylation is present at asparagine 2072. The Link domain occupies 2206-2298 (GVFHLRSPLG…SEMWDVFCYR (93 aa)). Asparagine 2287, asparagine 2303, asparagine 2375, asparagine 2391, and asparagine 2400 each carry an N-linked (GlcNAc...) asparagine glycan. Residues 2318-2452 (NGNLLQVLMS…GVLHIISEPL (135 aa)) form the FAS1 7 domain. The helical transmembrane segment at 2465–2485 (GLGTGIFCAVVLVTGAIALAA) threads the bilayer. Over 2486–2559 (YSYFRLNQRT…NSDPLGALRS (74 aa)) the chain is Cytoplasmic. Serine 2503 is modified (phosphoserine). Residues 2510–2520 (LAFGKQQPESI) form an interaction with TMSB4X region. Residues 2514-2559 (KQQPESITNPLYETSTPAAPEPSCDPFTDSGERELENSDPLGALRS) form a disordered region. Residues 2516–2530 (QPESITNPLYETSTP) show a composition bias toward polar residues.

As to quaternary structure, interacts with heparin, alpha-M/beta-2 integrin (ITGAM and ITGB2), and thymosin beta 4 (TMSB4X). Interacts with GULP1. Associates with clathrin and adapter protein AP-2; in liver sinusoidal endothelial cells (LSECs). Glycosylated. In terms of processing, proteolytically processed to yield a smaller protein. Expressed in endothelial sinuses of liver, lymph nodes, bone marrow, spleen and in specialised structures of eye, heart, brain and kidney. Expression is detected in corneal and lens epithelium, in mesenchymal cells of the heart valves, in the ependymal cells lining the ventricles in the brain, and in the prismatic epithelial cells covering the renal papillae.

Its subcellular location is the cytoplasm. The protein localises to the cell membrane. Its function is as follows. Phosphatidylserine receptor that enhances the engulfment of apoptotic cells. Hyaluronan receptor that binds to and mediates endocytosis of hyaluronic acid (HA). Also acts, in different species, as a primary systemic scavenger receptor for heparin (Hep), chondroitin sulfate (CS), dermatan sulfate (DS), nonglycosaminoglycan (GAG), acetylated low-density lipoprotein (AcLDL), pro-collagen propeptides and advanced glycation end products (AGE). May serve to maintain tissue integrity by supporting extracellular matrix turnover or it may contribute to maintaining fluidity of bodily liquids by resorption of hyaluronan. Counter receptor which plays an important role in lymphocyte recruitment in the hepatic vasculature. Binds to both Gram-positive and Gram-negative bacteria and may play a role in defense against bacterial infection. The proteolytically processed short form also functions as an endocytosis receptor for heparin internalization as well as HA and CS. This is Stabilin-2 from Mus musculus (Mouse).